The sequence spans 468 residues: UDP-N-acetylmuramate--L-alanine ligase (468 aa).

Residue 118 to 124 (GTHGKTT) coordinates ATP.

The protein belongs to the MurCDEF family.

The protein resides in the cytoplasm. The catalysed reaction is UDP-N-acetyl-alpha-D-muramate + L-alanine + ATP = UDP-N-acetyl-alpha-D-muramoyl-L-alanine + ADP + phosphate + H(+). Its pathway is cell wall biogenesis; peptidoglycan biosynthesis. In terms of biological role, cell wall formation. This is UDP-N-acetylmuramate--L-alanine ligase from Roseobacter denitrificans (strain ATCC 33942 / OCh 114) (Erythrobacter sp. (strain OCh 114)).